The following is a 1175-amino-acid chain: 1-phosphatidylinositol 4,5-bisphosphate phosphodiesterase beta-4 (1175 aa).

Alanine 2 is modified (N-acetylalanine). The region spanning 313–463 (QEMDHPLAHY…LKRKILIKNK (151 aa)) is the PI-PLC X-box domain. Catalysis depends on residues histidine 328 and histidine 375. Residues 487–512 (AAPASILEDDNEEEIESADQEEEAHP) are disordered. Residues 493–508 (LEDDNEEEIESADQEE) are compositionally biased toward acidic residues. One can recognise a PI-PLC Y-box domain in the interval 565–681 (LSTMINYAQP…GYLLKPDFMR (117 aa)). Residues 684-809 (DRTFDPFSET…SLRNEGNKPL (126 aa)) enclose the C2 domain. 2 disordered regions span residues 860-904 (SDIA…LGSG) and 1082-1110 (KISMENSKAISQDKSIKNKAERERRVREL). 2 stretches are compositionally biased toward polar residues: residues 885–900 (VTPQSSSELRPTTTAA) and 1085–1094 (MENSKAISQD). Position 886 is a phosphothreonine (threonine 886). Basic and acidic residues predominate over residues 1095 to 1109 (KSIKNKAERERRVRE).

It depends on Ca(2+) as a cofactor. Preferentially expressed in the retina.

The protein localises to the cell membrane. The enzyme catalyses a 1,2-diacyl-sn-glycero-3-phospho-(1D-myo-inositol-4,5-bisphosphate) + H2O = 1D-myo-inositol 1,4,5-trisphosphate + a 1,2-diacyl-sn-glycerol + H(+). The catalysed reaction is a 1,2-diacyl-sn-glycero-3-phospho-(1D-myo-inositol) + H2O = 1D-myo-inositol 1-phosphate + a 1,2-diacyl-sn-glycerol + H(+). Activated phosphatidylinositol-specific phospholipase C enzymes catalyze the production of the second messenger molecules diacylglycerol (DAG) and inositol 1,4,5-trisphosphate (IP3) involved in G-protein coupled receptor signaling pathways. PLCB4 is a direct effector of the endothelin receptor signaling pathway that plays an essential role in lower jaw and middle ear structures development. This chain is 1-phosphatidylinositol 4,5-bisphosphate phosphodiesterase beta-4, found in Rattus norvegicus (Rat).